The sequence spans 907 residues: Translation initiation factor IF-2 (907 aa).

Residues 26–317 (DAGMKKSSSD…KPKSMQHGFD (292 aa)) form a disordered region. Composition is skewed to basic and acidic residues over residues 28 to 44 (GMKKSSSDQVSDEEKQK) and 101 to 248 (SAIE…DTDY). Positions 299 to 308 (KGGRKGKLSK) are enriched in basic residues. The tr-type G domain maps to 406–575 (PRAPVVTIMG…LLQAEVLELT (170 aa)). The interval 415–422 (GHVDHGKT) is G1. Position 415–422 (415–422 (GHVDHGKT)) interacts with GTP. The G2 stretch occupies residues 440 to 444 (GITQH). A G3 region spans residues 461 to 464 (DTPG). GTP contacts are provided by residues 461-465 (DTPGH) and 515-518 (NKID). The tract at residues 515 to 518 (NKID) is G4. Positions 551–553 (SAK) are G5.

This sequence belongs to the TRAFAC class translation factor GTPase superfamily. Classic translation factor GTPase family. IF-2 subfamily.

The protein localises to the cytoplasm. One of the essential components for the initiation of protein synthesis. Protects formylmethionyl-tRNA from spontaneous hydrolysis and promotes its binding to the 30S ribosomal subunits. Also involved in the hydrolysis of GTP during the formation of the 70S ribosomal complex. This is Translation initiation factor IF-2 from Vibrio vulnificus (strain YJ016).